Reading from the N-terminus, the 206-residue chain is Ribosomal RNA large subunit methyltransferase E (206 aa).

Residues Gly60, Trp62, Asp80, Asp96, and Asp121 each coordinate S-adenosyl-L-methionine. Lys161 serves as the catalytic Proton acceptor.

The protein belongs to the class I-like SAM-binding methyltransferase superfamily. RNA methyltransferase RlmE family.

Its subcellular location is the cytoplasm. The enzyme catalyses uridine(2552) in 23S rRNA + S-adenosyl-L-methionine = 2'-O-methyluridine(2552) in 23S rRNA + S-adenosyl-L-homocysteine + H(+). Functionally, specifically methylates the uridine in position 2552 of 23S rRNA at the 2'-O position of the ribose in the fully assembled 50S ribosomal subunit. The chain is Ribosomal RNA large subunit methyltransferase E from Francisella tularensis subsp. tularensis (strain FSC 198).